The primary structure comprises 639 residues: MGKIIGIDLGTTNSCVAVLDGGKARVLENAEGDRTTPSIIAYTDDETIVGSPAKRQAVTNPTNTFFAIKRLIGRRFKDDEVQRDVNIMPFKIIAADNGDAWVESRGNKMAPPQVSAEILKKMKKTAEDFLGEEVTEAVITVPAYFNDSQRQATKDAGRIAGLDVKRIINEPTAAALAYGIDKKQGDNIVAVYDLGGGTFDISIIEIDSNDGDQTFEVLATNGDTHLGGEDFDNRLINYLADEFKKEQGLDLRKDPLAMQRLKEAAEKAKIELSSTNHTEVNLPYITADATGPKHLVIKITRAKLESLVEDLILRTLEPLKVALADADLSVTDINEVILVGGQTRMPKVQEAVTNFFGKEPRKDVNPDEAVAVGAAIQAGVLSGDVKDVLLLDVTPLSLGIETMGSVMTKLIEKNTTIPTKAQQVFSTADDNQSAVTIHVLQGERKQASANKSLGQFNLDGIEPAQRGQPQIEVMFDIDADGILHVSATDKKTGKKQNITIKASSGLSEEEVAQMVRDAEAHADEDKKFEELVQSRNQADGLVHATKKQVEEAGDALPSEDKEKIQAAMDAVDTAIKGNDKEAIEKATQNLIEASAKLMEIAQAKSQAQGGDNADAGKQANAAADDVVDAEFEEVKDDKK.

Thr198 carries the phosphothreonine; by autocatalysis modification. The tract at residues 604 to 639 (KSQAQGGDNADAGKQANAAADDVVDAEFEEVKDDKK) is disordered. Residues 606 to 624 (QAQGGDNADAGKQANAAAD) are compositionally biased toward low complexity. Acidic residues predominate over residues 625–639 (DVVDAEFEEVKDDKK).

Belongs to the heat shock protein 70 family.

In terms of biological role, acts as a chaperone. The chain is Chaperone protein DnaK from Shewanella baltica (strain OS223).